Here is a 176-residue protein sequence, read N- to C-terminus: Probable RNA-binding protein EIF1AD (176 aa).

Residues threonine 5 to aspartate 89 enclose the S1-like domain. Residues alanine 117–aspartate 128 show a composition bias toward basic and acidic residues. Residues alanine 117 to lysine 176 form a disordered region. The segment covering aspartate 129–aspartate 164 has biased composition (acidic residues). Over residues tyrosine 166 to lysine 176 the composition is skewed to polar residues.

The protein belongs to the EIF1AD family.

This chain is Probable RNA-binding protein EIF1AD, found in Caenorhabditis briggsae.